The following is a 351-amino-acid chain: 1-aminocyclopropane-1-carboxylate oxidase homolog 4 (351 aa).

In terms of domain architecture, Fe2OG dioxygenase spans 200 to 304; it reads KSQYMVGQHY…AIVFSTFMRA (105 aa). Residues histidine 224, aspartate 226, and histidine 280 each coordinate Fe cation. A 2-oxoglutarate-binding site is contributed by arginine 291.

This sequence belongs to the iron/ascorbate-dependent oxidoreductase family. Fe(2+) serves as cofactor.

This is 1-aminocyclopropane-1-carboxylate oxidase homolog 4 from Arabidopsis thaliana (Mouse-ear cress).